Consider the following 432-residue polypeptide: Enolase (432 aa).

Glutamine 163 is a (2R)-2-phosphoglycerate binding site. Glutamate 205 (proton donor) is an active-site residue. 3 residues coordinate Mg(2+): aspartate 242, glutamate 285, and aspartate 312. 4 residues coordinate (2R)-2-phosphoglycerate: lysine 337, arginine 366, serine 367, and lysine 388. Residue lysine 337 is the Proton acceptor of the active site.

Belongs to the enolase family. The cofactor is Mg(2+).

The protein localises to the cytoplasm. The protein resides in the secreted. It localises to the cell surface. The catalysed reaction is (2R)-2-phosphoglycerate = phosphoenolpyruvate + H2O. It functions in the pathway carbohydrate degradation; glycolysis; pyruvate from D-glyceraldehyde 3-phosphate: step 4/5. In terms of biological role, catalyzes the reversible conversion of 2-phosphoglycerate (2-PG) into phosphoenolpyruvate (PEP). It is essential for the degradation of carbohydrates via glycolysis. The polypeptide is Enolase (Bifidobacterium adolescentis (strain ATCC 15703 / DSM 20083 / NCTC 11814 / E194a)).